The chain runs to 102 residues: Small ribosomal subunit protein uS10 (102 aa).

The protein belongs to the universal ribosomal protein uS10 family. In terms of assembly, part of the 30S ribosomal subunit.

In terms of biological role, involved in the binding of tRNA to the ribosomes. The chain is Small ribosomal subunit protein uS10 from Rhizobium etli (strain CIAT 652).